A 201-amino-acid polypeptide reads, in one-letter code: GTP cyclohydrolase 1 (201 aa).

Residues Cys-90, His-93, and Cys-163 each coordinate Zn(2+).

Belongs to the GTP cyclohydrolase I family. In terms of assembly, homomer.

The enzyme catalyses GTP + H2O = 7,8-dihydroneopterin 3'-triphosphate + formate + H(+). Its pathway is cofactor biosynthesis; 7,8-dihydroneopterin triphosphate biosynthesis; 7,8-dihydroneopterin triphosphate from GTP: step 1/1. This chain is GTP cyclohydrolase 1, found in Streptomyces griseus subsp. griseus (strain JCM 4626 / CBS 651.72 / NBRC 13350 / KCC S-0626 / ISP 5235).